A 486-amino-acid polypeptide reads, in one-letter code: Aromatic-L-amino-acid decarboxylase (486 aa).

Methionine 1 bears the N-acetylmethionine mark. 2 tandem repeats follow at residues 58–115 (QDVE…TELE) and 118–178 (MMDW…TQGA). Residues 58–178 (QDVEKIIMPG…AASPGLTQGA (121 aa)) are 2 X approximate tandem repeats. Threonine 82 is a binding site for substrate. Residues alanine 148 and serine 149 each coordinate pyridoxal 5'-phosphate. Histidine 192 is a binding site for substrate. Pyridoxal 5'-phosphate contacts are provided by threonine 246 and asparagine 300. Lysine 303 carries the N6-(pyridoxal phosphate)lysine modification.

It belongs to the group II decarboxylase family. As to quaternary structure, homodimer. Pyridoxal 5'-phosphate serves as cofactor.

The enzyme catalyses L-dopa + H(+) = dopamine + CO2. The catalysed reaction is 5-hydroxy-L-tryptophan + H(+) = serotonin + CO2. The protein operates within catecholamine biosynthesis; dopamine biosynthesis; dopamine from L-tyrosine: step 2/2. In terms of biological role, catalyzes the decarboxylation of L-3,4-dihydroxyphenylalanine (DOPA) to dopamine and L-5-hydroxytryptophan to serotonin. The protein is Aromatic-L-amino-acid decarboxylase (DDC) of Sus scrofa (Pig).